Consider the following 453-residue polypeptide: Validoxylamine A glucosyltransferase (453 aa).

This sequence belongs to the glycosyltransferase 2 family. Mn(2+) is required as a cofactor.

It carries out the reaction validoxylamine A + UDP-alpha-D-glucose = validamycin A + UDP + H(+). In terms of biological role, involved in the biosynthesis of the antifungal agent validamycin A. Catalyzes the final attachment of glucose from UDP-alpha-D-glucose to validoxylamine A to yield validamycin A. This Streptomyces hygroscopicus subsp. limoneus protein is Validoxylamine A glucosyltransferase.